Reading from the N-terminus, the 239-residue chain is Fatty acid metabolism regulator protein (239 aa).

Positions 6–74 (QSPAGFAEEY…HGKPTKVNNF (69 aa)) constitute an HTH gntR-type domain. Residues 34 to 53 (ERELSELIGVTRTTLREVLQ) constitute a DNA-binding region (H-T-H motif).

Homodimer.

The protein localises to the cytoplasm. In terms of biological role, multifunctional regulator of fatty acid metabolism. Represses transcription of at least eight genes required for fatty acid transport and beta-oxidation including fadA, fadB, fadD, fadL and fadE. Activates transcription of at least three genes required for unsaturated fatty acid biosynthesis: fabA, fabB and iclR, the gene encoding the transcriptional regulator of the aceBAK operon encoding the glyoxylate shunt enzymes. Binding of FadR is specifically inhibited by long chain fatty acyl-CoA compounds. In Salmonella typhi, this protein is Fatty acid metabolism regulator protein.